Reading from the N-terminus, the 251-residue chain is Aspartate/glutamate leucyltransferase (251 aa).

The protein belongs to the R-transferase family. Bpt subfamily.

The protein resides in the cytoplasm. The enzyme catalyses N-terminal L-glutamyl-[protein] + L-leucyl-tRNA(Leu) = N-terminal L-leucyl-L-glutamyl-[protein] + tRNA(Leu) + H(+). The catalysed reaction is N-terminal L-aspartyl-[protein] + L-leucyl-tRNA(Leu) = N-terminal L-leucyl-L-aspartyl-[protein] + tRNA(Leu) + H(+). Functions in the N-end rule pathway of protein degradation where it conjugates Leu from its aminoacyl-tRNA to the N-termini of proteins containing an N-terminal aspartate or glutamate. This Xanthomonas oryzae pv. oryzae (strain MAFF 311018) protein is Aspartate/glutamate leucyltransferase.